We begin with the raw amino-acid sequence, 132 residues long: MKKNITKVIIASTVIATGLLTQTNDAKAFFSYEWKGLEIAKNLADQAKKDDERADKLIKEADEKNEHYKGKTVEDLYVIAKKMGKGNTIAVVKIKDGGKNGYYTFDITRPLEEHRKNIPVVKNGEIDSITWY.

Positions 1–28 (MKKNITKVIIASTVIATGLLTQTNDAKA) are cleaved as a signal peptide.

This sequence belongs to the CHIPS/FLIPr family.

It is found in the secreted. In terms of biological role, may be involved in countering the first line of host defense mechanisms. Impairs the leukocyte response to FPRL1 agonists by binding directly to host FPRL1. The polypeptide is FPRL1 inhibitory protein (flr) (Staphylococcus aureus (strain MW2)).